We begin with the raw amino-acid sequence, 343 residues long: L-threonine 3-dehydrogenase (343 aa).

Cys-40 lines the Zn(2+) pocket. Catalysis depends on charge relay system residues Thr-42 and His-45. Zn(2+) contacts are provided by His-65, Glu-66, Cys-95, Cys-98, Cys-101, and Cys-109. NAD(+) is bound by residues Ile-177, Asp-197, Arg-202, 264-266 (LGI), and 288-289 (IY).

Belongs to the zinc-containing alcohol dehydrogenase family. As to quaternary structure, homotetramer. Requires Zn(2+) as cofactor.

Its subcellular location is the cytoplasm. The catalysed reaction is L-threonine + NAD(+) = (2S)-2-amino-3-oxobutanoate + NADH + H(+). The protein operates within amino-acid degradation; L-threonine degradation via oxydo-reductase pathway; glycine from L-threonine: step 1/2. In terms of biological role, catalyzes the NAD(+)-dependent oxidation of L-threonine to 2-amino-3-ketobutyrate. The polypeptide is L-threonine 3-dehydrogenase (Vibrio vulnificus (strain YJ016)).